We begin with the raw amino-acid sequence, 542 residues long: 2,3-bisphosphoglycerate-independent phosphoglycerate mutase (542 aa).

Residues Asp-24 and Ser-74 each contribute to the Mn(2+) site. Ser-74 serves as the catalytic Phosphoserine intermediate. Substrate contacts are provided by residues His-135, Arg-165–Asp-166, Arg-197, Arg-203, Arg-268–Arg-271, and Lys-341. Positions 408, 412, 449, 450, and 467 each coordinate Mn(2+).

This sequence belongs to the BPG-independent phosphoglycerate mutase family. As to quaternary structure, monomer. Mn(2+) is required as a cofactor.

It carries out the reaction (2R)-2-phosphoglycerate = (2R)-3-phosphoglycerate. Its pathway is carbohydrate degradation; glycolysis; pyruvate from D-glyceraldehyde 3-phosphate: step 3/5. Its function is as follows. Catalyzes the interconversion of 2-phosphoglycerate and 3-phosphoglycerate. This is 2,3-bisphosphoglycerate-independent phosphoglycerate mutase from Prochlorococcus marinus (strain NATL1A).